Here is a 135-residue protein sequence, read N- to C-terminus: Small ribosomal subunit protein eS6 (135 aa).

It belongs to the eukaryotic ribosomal protein eS6 family.

The chain is Small ribosomal subunit protein eS6 from Methanospirillum hungatei JF-1 (strain ATCC 27890 / DSM 864 / NBRC 100397 / JF-1).